A 414-amino-acid chain; its full sequence is Gamma-glutamyl phosphate reductase (414 aa).

This sequence belongs to the gamma-glutamyl phosphate reductase family.

It is found in the cytoplasm. The enzyme catalyses L-glutamate 5-semialdehyde + phosphate + NADP(+) = L-glutamyl 5-phosphate + NADPH + H(+). The protein operates within amino-acid biosynthesis; L-proline biosynthesis; L-glutamate 5-semialdehyde from L-glutamate: step 2/2. Catalyzes the NADPH-dependent reduction of L-glutamate 5-phosphate into L-glutamate 5-semialdehyde and phosphate. The product spontaneously undergoes cyclization to form 1-pyrroline-5-carboxylate. In Thermoanaerobacter pseudethanolicus (strain ATCC 33223 / 39E) (Clostridium thermohydrosulfuricum), this protein is Gamma-glutamyl phosphate reductase.